We begin with the raw amino-acid sequence, 356 residues long: Dihydroorotate dehydrogenase (quinone) (356 aa).

FMN is bound by residues A68–K72 and T92. K72 serves as a coordination point for substrate. N117 to F121 provides a ligand contact to substrate. Residues N145 and N178 each contribute to the FMN site. N178 contacts substrate. S181 acts as the Nucleophile in catalysis. N183 lines the substrate pocket. FMN-binding residues include K214 and T242. Substrate is bound at residue N243–T244. FMN is bound by residues G266, G295, and Y316–T317.

The protein belongs to the dihydroorotate dehydrogenase family. Type 2 subfamily. Monomer. FMN serves as cofactor.

The protein localises to the cell membrane. It carries out the reaction (S)-dihydroorotate + a quinone = orotate + a quinol. It participates in pyrimidine metabolism; UMP biosynthesis via de novo pathway; orotate from (S)-dihydroorotate (quinone route): step 1/1. Its function is as follows. Catalyzes the conversion of dihydroorotate to orotate with quinone as electron acceptor. This is Dihydroorotate dehydrogenase (quinone) from Mycobacterium sp. (strain KMS).